The chain runs to 345 residues: Succinylglutamate desuccinylase (345 aa).

The Zn(2+) site is built by His64, Glu67, and His161. The active site involves Glu225.

It belongs to the AspA/AstE family. Succinylglutamate desuccinylase subfamily. It depends on Zn(2+) as a cofactor.

The enzyme catalyses N-succinyl-L-glutamate + H2O = L-glutamate + succinate. The protein operates within amino-acid degradation; L-arginine degradation via AST pathway; L-glutamate and succinate from L-arginine: step 5/5. In terms of biological role, transforms N(2)-succinylglutamate into succinate and glutamate. This chain is Succinylglutamate desuccinylase, found in Shewanella pealeana (strain ATCC 700345 / ANG-SQ1).